Consider the following 408-residue polypeptide: PTI1-like tyrosine-protein kinase 3 (408 aa).

The span at 59–76 (SSENEHLRSPKHHNDFGH) shows a compositional bias: basic and acidic residues. The interval 59-91 (SSENEHLRSPKHHNDFGHHTRKPQAAVKPDALK) is disordered. The Protein kinase domain occupies 113 to 395 (FGSKSLIGEG…IVVKALQPLL (283 aa)). ATP-binding positions include 119–127 (IGEGSYGRA) and K141. D245 (proton acceptor) is an active-site residue.

It belongs to the protein kinase superfamily. Tyr protein kinase family. As to quaternary structure, interacts with OXI1. In terms of processing, phosphorylated by OXI1.

It localises to the cell membrane. The catalysed reaction is L-tyrosyl-[protein] + ATP = O-phospho-L-tyrosyl-[protein] + ADP + H(+). The polypeptide is PTI1-like tyrosine-protein kinase 3 (PTI13) (Arabidopsis thaliana (Mouse-ear cress)).